We begin with the raw amino-acid sequence, 89 residues long: Small ribosomal subunit protein uS15 (89 aa).

Belongs to the universal ribosomal protein uS15 family. Part of the 30S ribosomal subunit. Forms a bridge to the 50S subunit in the 70S ribosome, contacting the 23S rRNA.

In terms of biological role, one of the primary rRNA binding proteins, it binds directly to 16S rRNA where it helps nucleate assembly of the platform of the 30S subunit by binding and bridging several RNA helices of the 16S rRNA. Functionally, forms an intersubunit bridge (bridge B4) with the 23S rRNA of the 50S subunit in the ribosome. This is Small ribosomal subunit protein uS15 from Beutenbergia cavernae (strain ATCC BAA-8 / DSM 12333 / CCUG 43141 / JCM 11478 / NBRC 16432 / NCIMB 13614 / HKI 0122).